Here is a 418-residue protein sequence, read N- to C-terminus: Hydroxysteroid dehydrogenase-like protein 2 (418 aa).

Residues 17 to 23 (GASRGIG), lysine 42, and aspartate 74 each bind NADP(+). Lysine 42 carries the N6-(2-hydroxyisobutyryl)lysine modification. Lysine 116 carries the post-translational modification N6-acetyllysine. Tyrosine 168 acts as the Proton acceptor in catalysis. Position 172 (lysine 172) interacts with NADP(+). Residues 287-310 (STGAVPEFKEEKPQPQPKPRSGAV) are disordered. Residues 306-415 (RSGAVEETFR…KLEKLMNQMN (110 aa)) enclose the SCP2 domain. Lysine 318 carries the post-translational modification N6-succinyllysine.

It belongs to the short-chain dehydrogenases/reductases (SDR) family.

Its subcellular location is the peroxisome. It is found in the mitochondrion. Its function is as follows. Has apparently no steroid dehydrogenase activity. Controls bile acid (BA) and lipid metabolism in response to nutritional cues. This is Hydroxysteroid dehydrogenase-like protein 2 (HSDL2) from Pongo abelii (Sumatran orangutan).